The chain runs to 131 residues: Phosphoribosyl-ATP pyrophosphatase 2 (131 aa).

The segment at 105–131 is disordered; the sequence is RIGKPAAPHATRRPVIPQEARAVRKHR.

Belongs to the PRA-PH family.

The protein localises to the cytoplasm. The enzyme catalyses 1-(5-phospho-beta-D-ribosyl)-ATP + H2O = 1-(5-phospho-beta-D-ribosyl)-5'-AMP + diphosphate + H(+). The protein operates within amino-acid biosynthesis; L-histidine biosynthesis; L-histidine from 5-phospho-alpha-D-ribose 1-diphosphate: step 2/9. In Rhodopseudomonas palustris (strain ATCC BAA-98 / CGA009), this protein is Phosphoribosyl-ATP pyrophosphatase 2 (hisE2).